Here is a 73-residue protein sequence, read N- to C-terminus: uncharacterized protein (73 aa).

Positions 1–28 are cleaved as a signal peptide; it reads MKFLLSVIAGLLILALYLFWKVQPPVWI.

This is an uncharacterized protein from Bacillus subtilis (strain 168).